Reading from the N-terminus, the 529-residue chain is Cytochrome P450 monooxygenase fsoB (529 aa).

A helical membrane pass occupies residues 4-24 (WLLSLLIAGVVFAIFQLRTVG). Cysteine 436 contacts heme.

Belongs to the cytochrome P450 family. Heme is required as a cofactor.

The protein resides in the membrane. Functionally, cytochrome P450 monooxygenase; part of the gene cluster that mediates the biosynthesis of the enfumafungin-type antibiotic fuscoatroside. Four enzymes are sufficient to produce fuscoatroside: the terpene cyclase-glycosyl transferase fusion protein fsoAthe cytochrome P450 monoxygenases fsoD and fsoE, and the acetyltransferase fsoF; the cytochrome P450 monooxygenase fsoB and the glucose oxidase-like protein fsoC do not seem to play a role in biosynthesis of fuscoatroside. The chain is Cytochrome P450 monooxygenase fsoB from Humicola fuscoatra.